Reading from the N-terminus, the 438-residue chain is Putative truncated GMC-type inactive oxidoreductase L894 (438 aa).

An N-terminal signal peptide occupies residues methionine 1–cysteine 26. Aspartate 79–alanine 109 contributes to the FAD binding site.

Belongs to the GMC oxidoreductase family. The cofactor is FAD.

Its subcellular location is the virion. The protein is Putative truncated GMC-type inactive oxidoreductase L894 of Acanthamoeba polyphaga (Amoeba).